We begin with the raw amino-acid sequence, 117 residues long: Large ribosomal subunit protein uL18 (117 aa).

The protein belongs to the universal ribosomal protein uL18 family. As to quaternary structure, part of the 50S ribosomal subunit; part of the 5S rRNA/L5/L18/L25 subcomplex. Contacts the 5S and 23S rRNAs.

Functionally, this is one of the proteins that bind and probably mediate the attachment of the 5S RNA into the large ribosomal subunit, where it forms part of the central protuberance. This is Large ribosomal subunit protein uL18 from Azoarcus sp. (strain BH72).